Here is a 178-residue protein sequence, read N- to C-terminus: Protein modigliani (178 aa).

Probably homodimerizes. Component of the MTV complex, composed of moi/modigliani, tea and ver/verrocchio. Interacts with ver/verrochio and tea (via C-terminus); the interactions are direct and require fully intact moi/modigliani and ver/verrocchio. The MTV complex is recruited to telomeres by the HipHop-HOAP complex, consisting of HipHop, cav/HOAP and Su(var)205/HP1 to form the terminin telomere-capping complex. Interacts with cav/HOAP and Su(var)205/HP1; the interactions are direct. Probably interacts with peo (via N-terminus and UBC domain).

Its subcellular location is the nucleus. It localises to the chromosome. The protein localises to the telomere. Its function is as follows. Part of the MTV complex that associates with the HipHop-HOAP complex to form the terminin telomere-capping complex involved in telomere maintenance and prevention of telomere fusion. Potentially functions downstream of mei-41/ATR. As part of the MTV complex binds single stranded DNA in a sequence-independent manner, protecting it from degradation. The chain is Protein modigliani from Drosophila melanogaster (Fruit fly).